The chain runs to 734 residues: Translation initiation factor IF-2 (734 aa).

The disordered stretch occupies residues 39 to 110 (SKFAPRSSFT…TGKPETKKRE (72 aa)). The segment covering 82–110 (DYEKRKLAEQRATRRLKGDTGKPETKKRE) has biased composition (basic and acidic residues). The 168-residue stretch at 238–405 (NRPPIVTVMG…SIVLQAEILD (168 aa)) folds into the tr-type G domain. The segment at 247–254 (GHVDHGKT) is G1. 247–254 (GHVDHGKT) lines the GTP pocket. The interval 272 to 276 (GITQH) is G2. The tract at residues 293–296 (DTPG) is G3. GTP-binding positions include 293–297 (DTPGH) and 347–350 (NKCD). Residues 347–350 (NKCD) are G4. Residues 383-385 (SAK) form a G5 region.

It belongs to the TRAFAC class translation factor GTPase superfamily. Classic translation factor GTPase family. IF-2 subfamily.

The protein resides in the cytoplasm. Functionally, one of the essential components for the initiation of protein synthesis. Protects formylmethionyl-tRNA from spontaneous hydrolysis and promotes its binding to the 30S ribosomal subunits. Also involved in the hydrolysis of GTP during the formation of the 70S ribosomal complex. The chain is Translation initiation factor IF-2 from Pelagibacter ubique (strain HTCC1062).